A 321-amino-acid polypeptide reads, in one-letter code: tRNA U34 carboxymethyltransferase (321 aa).

Carboxy-S-adenosyl-L-methionine contacts are provided by residues lysine 90, tryptophan 104, lysine 109, glycine 129, 151-153 (DPT), 180-181 (IE), methionine 195, tyrosine 199, and arginine 314.

Belongs to the class I-like SAM-binding methyltransferase superfamily. CmoB family. As to quaternary structure, homotetramer.

The catalysed reaction is carboxy-S-adenosyl-L-methionine + 5-hydroxyuridine(34) in tRNA = 5-carboxymethoxyuridine(34) in tRNA + S-adenosyl-L-homocysteine + H(+). Functionally, catalyzes carboxymethyl transfer from carboxy-S-adenosyl-L-methionine (Cx-SAM) to 5-hydroxyuridine (ho5U) to form 5-carboxymethoxyuridine (cmo5U) at position 34 in tRNAs. The chain is tRNA U34 carboxymethyltransferase from Haemophilus influenzae (strain PittEE).